A 354-amino-acid polypeptide reads, in one-letter code: 3'-5' exonuclease (354 aa).

Residues 1-120 (MERFLTKMPI…PSPEKEKPEK (120 aa)) form a disordered region. 2 stretches are compositionally biased toward basic and acidic residues: residues 13-30 (KANE…ETPK) and 37-50 (KKDT…KENA). Residues 59 to 70 (TKGRPGRPAAKR) show a composition bias toward basic residues. The span at 71–91 (KNLDTPDVKDEKIAMEEENPP) shows a compositional bias: basic and acidic residues. A phosphoserine mark is found at Ser104, Ser110, and Ser112. Residues 149–314 (WVEKQKDDVV…GQVIYRELER (166 aa)) form the 3'-5' exonuclease domain. Mg(2+) contacts are provided by Asp163, Glu165, and Asp301.

Belongs to the WRNexo family.

The protein resides in the nucleus. Has exonuclease activity on both single-stranded and duplex templates bearing overhangs, but not blunt ended duplex DNA, and cleaves in a 3'-5' direction. Essential for the formation of DNA replication focal centers. Has an important role in maintaining genome stability. In Drosophila simulans (Fruit fly), this protein is 3'-5' exonuclease.